We begin with the raw amino-acid sequence, 464 residues long: Glutamate--tRNA ligase (464 aa).

The short motif at 9–19 is the 'HIGH' region element; sequence PSPTGYLHIGG. The short motif at 242-246 is the 'KMSKS' region element; that stretch reads KISKR. An ATP-binding site is contributed by K245.

The protein belongs to the class-I aminoacyl-tRNA synthetase family. Glutamate--tRNA ligase type 1 subfamily. As to quaternary structure, monomer.

Its subcellular location is the cytoplasm. It catalyses the reaction tRNA(Glu) + L-glutamate + ATP = L-glutamyl-tRNA(Glu) + AMP + diphosphate. In terms of biological role, catalyzes the attachment of glutamate to tRNA(Glu) in a two-step reaction: glutamate is first activated by ATP to form Glu-AMP and then transferred to the acceptor end of tRNA(Glu). In Neisseria meningitidis serogroup A / serotype 4A (strain DSM 15465 / Z2491), this protein is Glutamate--tRNA ligase.